The chain runs to 407 residues: MGCMSSKYADTSGGEVIQKKLSDTQTSNSSTTGSQNARVPVLENWLNIVLRGKPQNVESSGVRVKGNSTSGGNDIKVLLLGAGDSGKTTIMKQMRLLYSPGFSQVVRKQYRVMIFENIISSLCLLLEAMDNSNVSLLPENEKYRAVILRKHTSQPNEPFSPEIYEAVHALTLDTKLRTVQSCGTNLSLLDNFYYYQDHIDRIFDPQYIPSDQDILHCRIKTTGISEETFLLNRHHYRFFDVGGQRSERRKWIHCFENVTALLFLVSLAGYDQCLVEDNSGNQMQEALLLWDSICNSSWFSESAMILFLNKLDLFKRKVHISPIQKHFPDYQEVGSTPTFVQTQCPLADNAVRSGMYYFYLKFESLNRIASRSCYCHFTTATDTSLLQRVMVSVQDTIMSNNLQSLMF.

Residue Gly-2 is the site of N-myristoyl glycine attachment. A lipid anchor (S-palmitoyl cysteine) is attached at Cys-3. Residues 73-407 (NDIKVLLLGA…MSNNLQSLMF (335 aa)) enclose the G-alpha domain. The G1 motif stretch occupies residues 76-89 (KVLLLGAGDSGKTT). The GTP site is built by Asp-84, Ser-85, Gly-86, Lys-87, Thr-88, Thr-89, Asp-190, Leu-215, Thr-221, Gly-243, Asn-309, Lys-310, Asp-312, and Ala-380. Thr-88 contributes to the Mg(2+) binding site. The interval 213-221 (DILHCRIKT) is G2 motif. Residue Thr-221 coordinates Mg(2+). Residues 236–245 (YRFFDVGGQR) are G3 motif. A G4 motif region spans residues 305-312 (ILFLNKLD). Residues 378-383 (TTATDT) form a G5 motif region.

Belongs to the G-alpha family. G(q) subfamily. In terms of assembly, g proteins are composed of 3 units; alpha, beta and gamma. The alpha chain contains the guanine nucleotide binding site. The cofactor is Mg(2+).

Its function is as follows. Implicated in the mating and sporulation pathway. Probably coupled to mating-factor receptors. May act in concert with Ras1. The polypeptide is Guanine nucleotide-binding protein alpha-1 subunit (gpa1) (Schizosaccharomyces pombe (strain 972 / ATCC 24843) (Fission yeast)).